Reading from the N-terminus, the 160-residue chain is Regulatory protein RecX (160 aa).

It belongs to the RecX family.

The protein localises to the cytoplasm. Its function is as follows. Modulates RecA activity. The chain is Regulatory protein RecX from Xanthomonas oryzae pv. oryzae (strain MAFF 311018).